A 105-amino-acid polypeptide reads, in one-letter code: Putative RNA-binding protein RbpF (105 aa).

The RRM domain occupies serine 2–proline 79. Residues asparagine 75–glycine 84 show a composition bias toward basic and acidic residues. Residues asparagine 75–tyrosine 105 are disordered. Over residues serine 85–tyrosine 105 the composition is skewed to gly residues.

This is Putative RNA-binding protein RbpF (rbpF) from Nostoc sp. (strain PCC 7120 / SAG 25.82 / UTEX 2576).